Here is a 74-residue protein sequence, read N- to C-terminus: Protein kish-B (74 aa).

The N-terminal stretch at 1 to 22 (MTNVYSLDGILVFGLLFVCTCA) is a signal peptide. Topologically, residues 23-52 (YFKKVPRLKTWLLSEKKGVWGVFYKAAVIG) are extracellular. A helical membrane pass occupies residues 53–73 (TRLHAAVAIACVVMAFYVLFI). Residue Lys74 is a topological domain, cytoplasmic.

Belongs to the KISH family.

It is found in the golgi apparatus membrane. Involved in the early part of the secretory pathway. This chain is Protein kish-B (TMEM167B), found in Homo sapiens (Human).